The chain runs to 735 residues: MLKLFSAFRKDKIWDFDGGIHPPEMKTQSNGTPLRQVPLAPRFVIPLKQHIGAEGELCVSVGDRVLRGQALTRGRGRMLPVHAPTSGTVIAIAPHSTAHPSALAELSVIIDADGEDRWIEREGWSDYRAHSREALIERIHQYGVAGLGGAGFPTGVKLQGGGDKITTLIINAAECEPYITADDRLMQDCAAQIVEGIRILAHILQPREVLIGIEDNKPQAISMLRAVLADAHDISLRVIPTKYPSGGAKQLTRILTGKQVPHGGRSSDIGVLMQNVGTAYAVKRAVIDGEPITERVVTLTGEAVSRPGNVWARLGTPVRHLLNDAGFCPSADQMVIMGGPLMGFTLPWLDVPVVKITNCLLAPSVTEMGAPQEEKSCIRCSACADACPADLLPQQLYWFSKGQQHDKATAHHIADCIECGACAWVCPSNIPLVQYFRQEKAEINAIRLEEKRAAEAKARFEARQARLEREKAARLARHKSAAVQPAAKDQDAIAAALARVKEKQAQATQPVVIQAGSQPDNSAVIAAREARKAQARAKQAAHPMADSAIPGDDPSKAAVEAAIARAKARKQEQQAGSEPAEPVDPRKAAVEAAIARAKARKQEQQAGSEPVEAVDPRKAAVEAAIARAKARKQEQQTGSEPAEAVDPRKAAVEAAIARAKARKQEQQTGSEPAEPIDPRKAAVEAAIARAKARKQEQQAGSEPAEPADPRKAAVAAAIARVQAKKAAQQQVVNED.

2 consecutive 4Fe-4S ferredoxin-type domains span residues 368–397 and 407–436; these read MGAP…QQLY and KATA…VQYF. [4Fe-4S] cluster-binding residues include Cys377, Cys380, Cys383, Cys387, Cys416, Cys419, Cys422, and Cys426. Positions 538–715 are disordered; the sequence is KQAAHPMADS…PADPRKAAVA (178 aa). Residues 556-565 show a composition bias toward low complexity; that stretch reads KAAVEAAIAR.

This sequence belongs to the 4Fe4S bacterial-type ferredoxin family. RnfC subfamily. As to quaternary structure, the complex is composed of six subunits: RsxA, RsxB, RsxC, RsxD, RsxE and RsxG. It depends on [4Fe-4S] cluster as a cofactor.

It is found in the cell inner membrane. Part of a membrane-bound complex that couples electron transfer with translocation of ions across the membrane. Required to maintain the reduced state of SoxR. In Salmonella typhimurium (strain LT2 / SGSC1412 / ATCC 700720), this protein is Ion-translocating oxidoreductase complex subunit C.